The primary structure comprises 484 residues: Diaminopimelate decarboxylase 1, chloroplastic (484 aa).

Polar residues predominate over residues 1–28; the sequence is MAAATQFLSQPSSLNPHQLKNQTSQRSR. Positions 1-30 are disordered; sequence MAAATQFLSQPSSLNPHQLKNQTSQRSRSI. A chloroplast-targeting transit peptide spans 1–49; the sequence is MAAATQFLSQPSSLNPHQLKNQTSQRSRSIPVLSLKSTLKPLKRLSVKA. Residue A50 is modified to N-acetylalanine. K125 carries the post-translational modification N6-(pyridoxal phosphate)lysine. Pyridoxal 5'-phosphate-binding positions include G304 and 340-343; that span reads EPGR. Residues R343, R379, and Y383 each contribute to the substrate site. The active-site Proton donor is C411. Residues E412 and Y440 each contribute to the substrate site. Y440 is a pyridoxal 5'-phosphate binding site.

Belongs to the Orn/Lys/Arg decarboxylase class-II family. LysA subfamily. In terms of assembly, homodimer. Pyridoxal 5'-phosphate serves as cofactor.

The protein resides in the plastid. The protein localises to the chloroplast. It catalyses the reaction meso-2,6-diaminopimelate + H(+) = L-lysine + CO2. It functions in the pathway amino-acid biosynthesis; L-lysine biosynthesis via DAP pathway; L-lysine from DL-2,6-diaminopimelate: step 1/1. Specifically catalyzes the decarboxylation of meso-diaminopimelate (meso-DAP) to L-lysine. The chain is Diaminopimelate decarboxylase 1, chloroplastic (LYSA1) from Arabidopsis thaliana (Mouse-ear cress).